The primary structure comprises 370 residues: Cysteine-type anaerobic sulfatase-maturating enzyme (370 aa).

In terms of domain architecture, Radical SAM core spans 1 to 227; sequence MPPLSLLIKP…LKNLFDLWYE (227 aa). Residues Cys15 and Cys19 each contribute to the [4Fe-4S] cluster site. S-adenosyl-L-methionine is bound at residue Tyr21. Cys22 lines the [4Fe-4S] cluster pocket. 4 residues coordinate S-adenosyl-L-methionine: Gly66, Ser122, Arg134, and Leu195. Positions 255, 261, and 276 each coordinate [4Fe-4S] cluster. The active-site Proton acceptor is Asp277. [4Fe-4S] cluster-binding residues include Cys317, Cys320, Cys326, Cys330, and Cys348.

This sequence belongs to the radical SAM superfamily. Anaerobic sulfatase-maturating enzyme family. Requires [4Fe-4S] cluster as cofactor.

The enzyme catalyses L-cysteinyl-[sulfatase] + S-adenosyl-L-methionine + H2O = 3-oxo-L-alanyl-[sulfatase] + hydrogen sulfide + 5'-deoxyadenosine + L-methionine + 2 H(+). It participates in protein modification; sulfatase oxidation. Involved in 'Cys-type' sulfatase maturation under anaerobic conditions. Catalyzes the post-translational modification of cysteine into 3-oxoalanine (also known as C(alpha)-formylglycine (FGly)), by a free radical chemical mechanism initiated via the reductive cleavage of S-adenosyl-L-methionine (SAM). In Clostridium perfringens (strain 13 / Type A), this protein is Cysteine-type anaerobic sulfatase-maturating enzyme.